Consider the following 360-residue polypeptide: Neutral protease 2 homolog SS1G_13741 (360 aa).

Asn-129 is a glycosylation site (N-linked (GlcNAc...) asparagine). 2 disulfides stabilise this stretch: Cys-189/Cys-261 and Cys-268/Cys-286. His-311 contacts Zn(2+). Glu-312 is a catalytic residue. The Zn(2+) site is built by His-315 and Asp-326.

Belongs to the peptidase M35 family. The cofactor is Zn(2+).

The protein localises to the secreted. It catalyses the reaction Preferential cleavage of bonds with hydrophobic residues in P1'. Also 3-Asn-|-Gln-4 and 8-Gly-|-Ser-9 bonds in insulin B chain.. Its function is as follows. Secreted metalloproteinase that allows assimilation of proteinaceous substrates. Shows high activities on basic nuclear substrates such as histone and protamine. The protein is Neutral protease 2 homolog SS1G_13741 of Sclerotinia sclerotiorum (strain ATCC 18683 / 1980 / Ss-1) (White mold).